A 212-amino-acid polypeptide reads, in one-letter code: Redox-sensing transcriptional repressor Rex (212 aa).

Positions 16–55 (IYYRYLNILLDADKTRVSSTELSEAVKVDSATIRRDFSYF) form a DNA-binding region, H-T-H motif. 90-95 (GVGNLG) serves as a coordination point for NAD(+).

This sequence belongs to the transcriptional regulatory Rex family. As to quaternary structure, homodimer.

The protein localises to the cytoplasm. Functionally, modulates transcription in response to changes in cellular NADH/NAD(+) redox state. The protein is Redox-sensing transcriptional repressor Rex of Levilactobacillus brevis (strain ATCC 367 / BCRC 12310 / CIP 105137 / JCM 1170 / LMG 11437 / NCIMB 947 / NCTC 947) (Lactobacillus brevis).